The following is a 216-amino-acid chain: Probable nicotinate-nucleotide adenylyltransferase (216 aa).

The protein belongs to the NadD family.

The catalysed reaction is nicotinate beta-D-ribonucleotide + ATP + H(+) = deamido-NAD(+) + diphosphate. It functions in the pathway cofactor biosynthesis; NAD(+) biosynthesis; deamido-NAD(+) from nicotinate D-ribonucleotide: step 1/1. Catalyzes the reversible adenylation of nicotinate mononucleotide (NaMN) to nicotinic acid adenine dinucleotide (NaAD). The chain is Probable nicotinate-nucleotide adenylyltransferase from Geobacter sulfurreducens (strain ATCC 51573 / DSM 12127 / PCA).